Reading from the N-terminus, the 622-residue chain is Probable ATP-dependent RNA helicase DDX41 (622 aa).

Residues 1 to 15 (MEESEPERKRARTDE) are compositionally biased toward basic and acidic residues. 2 disordered regions span residues 1-39 (MEES…YVPL) and 52-84 (QRRR…PQSN). Residue S4 is modified to Phosphoserine. At K9 the chain carries N6-acetyllysine. K9 participates in a covalent cross-link: Glycyl lysine isopeptide (Lys-Gly) (interchain with G-Cter in ubiquitin). Phosphoserine occurs at positions 21 and 23. Y33 is modified (phosphotyrosine). Residue K115 forms a Glycyl lysine isopeptide (Lys-Gly) (interchain with G-Cter in ubiquitin) linkage. The Q motif signature appears at 181-209 (KSFKEMKFPAAILRGLKKKGIHHPTPIQI). Positions 212-396 (IPTILSGRDM…KSALVKPVTI (185 aa)) constitute a Helicase ATP-binding domain. 225 to 232 (AFTGSGKT) is a binding site for ATP. The short motif at 344–347 (DEAD) is the DEAD box element. The region spanning 407 to 567 (DVIQEVEYVK…KVPPVLQVLH (161 aa)) is the Helicase C-terminal domain. The residue at position 414 (Y414) is a Phosphotyrosine; by BTK. Glycyl lysine isopeptide (Lys-Gly) (interchain with G-Cter in SUMO2) cross-links involve residues K416 and K442. The segment at 580 to 597 (RGCAFCGGLGHRITDCPK) adopts a CCHC-type zinc-finger fold.

The protein belongs to the DEAD box helicase family. DDX41 subfamily. In terms of assembly, identified in the spliceosome C complex. Interacts with ERCC6. Interacts with FAM50A. Interacts with STING1. Interacts with CGAS. Interacts with several spliceosomes components such as PRP19 or CDC5L. In terms of processing, acetylation at Lys-9 regulates the nuclear/cytoplasmic localization. Post-translationally, phosphorylated by BTK; phosphorylation induces binding to dsDNA and STING1. 'Lys-48'-linked ubiquitinated and degraded by TRIM21 leading to negative regulation of the innate immune response to intracellular dsDNA.

Its subcellular location is the nucleus. It is found in the cytoplasm. The catalysed reaction is ATP + H2O = ADP + phosphate + H(+). Multifunctional protein that participates in many aspects of cellular RNA metabolism. Plays pivotal roles in innate immune sensing and hematopoietic homeostasis. Recognizes foreign or self-nucleic acids generated during microbial infection, thereby initiating anti-pathogen responses. Mechanistically, phosphorylation by BTK allows binding to dsDNA leading to interaction with STING1. Modulates the homeostasis of dsDNA through its ATP-dependent DNA-unwinding activity and ATP-independent strand-annealing activity. In turn, induces STING1-mediated type I interferon and cytokine responses to DNA and DNA viruses. Selectively modulates the transcription of certain immunity-associated genes by regulating their alternative splicing. Binds to RNA (R)-loops, structures consisting of DNA/RNA hybrids and a displaced strand of DNA that occur during transcription, and prevents their accumulation, thereby maintaining genome stability. Also participates in pre-mRNA splicing, translational regulation and snoRNA processing, which is essential for ribosome biogenesis. This chain is Probable ATP-dependent RNA helicase DDX41 (DDX41), found in Homo sapiens (Human).